The primary structure comprises 287 residues: 4-hydroxybenzoate octaprenyltransferase (287 aa).

6 helical membrane passes run V41–I61, V92–L112, F133–F153, V160–T180, T197–T217, and N267–F287.

Belongs to the UbiA prenyltransferase family. The cofactor is Mg(2+).

The protein resides in the cell inner membrane. The enzyme catalyses all-trans-octaprenyl diphosphate + 4-hydroxybenzoate = 4-hydroxy-3-(all-trans-octaprenyl)benzoate + diphosphate. It functions in the pathway cofactor biosynthesis; ubiquinone biosynthesis. Functionally, catalyzes the prenylation of para-hydroxybenzoate (PHB) with an all-trans polyprenyl group. Mediates the second step in the final reaction sequence of ubiquinone-8 (UQ-8) biosynthesis, which is the condensation of the polyisoprenoid side chain with PHB, generating the first membrane-bound Q intermediate 3-octaprenyl-4-hydroxybenzoate. This chain is 4-hydroxybenzoate octaprenyltransferase, found in Paraburkholderia phymatum (strain DSM 17167 / CIP 108236 / LMG 21445 / STM815) (Burkholderia phymatum).